The primary structure comprises 155 residues: Effector protein PevD1 (155 aa).

An N-terminal signal peptide occupies residues 1–18 (MQFTLAAAAALFGASALA). Positions 33–148 (NMYENIDIAD…NPTTIVIDSL (116 aa)) constitute an AA1-like domain. 2 disulfide bridges follow: Cys70–Cys84 and Cys125–Cys135.

Monomer. Interacts with Arabidopsis thaliana NRP.

The protein resides in the secreted. Its function is as follows. Effector protein. Elicits a hypersensitive response (HR) in tobacco plants (N.tabacum) and cotton (G.hirsutum). Boosts systemic acquired resistance (SAR) to tobacco mosaic virus (TMV) infection in N.tabacum and to V.dhaliae infection in primed cotton seedlings. The polypeptide is Effector protein PevD1 (Verticillium dahliae (Verticillium wilt)).